The sequence spans 837 residues: MLGRKIPGSGVLGAGAGMDRGRTGERLHAALAGLQELHFLRDKQSAMVHWALTLNRDQPDPSKQENVSKEELRLEATLSLLKQQLTRLRRQDVGLKTHLQQLDQQITELKLDVCKASTEHLESDSRPSSGFYELSDGGSGSLSNSCTSVYSESLSSSSQTSLLPLLSTSYASHGRSSCGQTGVSRRCSADESTAQSDAPRSGVKLGSSLIRTATARADRARQRPVSTGDLDRMIGPGFGAFKSTDVKSSTPCSSPQNPSVDPKYQSNLVSSNGTEVYRYPSPLHAVALQSPIFSCTSDQGSSVALDEMPEEETQNLNEESTISSSVGYINKLLQRSSSRVNLLSSIKRIETVSGTHEQIPRSQEMIYGSLNGPQLLGSLQQLSMPLENALETGKTSALNNNQKQMDPPCLGSNFKEVEVQMLHHGKHPESSLDLQKNNFPINNTAGKVGAESDNGASEKRSGHFPKDLSVVQKPVERKSSFTSGREGSRASCHDKSSIPQSEFVHAQFVPAGSQRVKVRQADKKTKSVKLRKKSSEKPSAKKQHQKPLSREFCTKNRTDLKQSGSCRGKVTYLEESQAQSCSDCSCNGLINSHCIQNNHQQIPSSKSTKSRKAPEPVYHPLDHAKKKPSSRKWPSSSEIPLPPTLHTQRSKEMLNSRKVAMVRSVSARPRSGHWGCPPPRALPHSLSTSSYFSYLESRYPAAPVSSRHPPRCESEFSEYSAECASLFHSTIAASSDGEMSDYTTNRFGDSESSQGSQTASESDSSLSLDEEDLLEEEEEDEGGLVWAQAAMGTTAAGFSLQQHHRSESAACRIKASRALKKKIRRFQPASLKVMTLV.

Positions 65-113 (ENVSKEELRLEATLSLLKQQLTRLRRQDVGLKTHLQQLDQQITELKLDV) form a coiled coil. 5 disordered regions span residues 189–265 (ADES…PKYQ), 424–497 (HGKH…DKSS), 512–564 (GSQR…KQSG), 600–649 (QQIP…HTQR), and 738–782 (EMSD…EDEG). 2 stretches are compositionally biased toward polar residues: residues 246-265 (VKSSTPCSSPQNPSVDPKYQ) and 432-445 (LDLQKNNFPINNTA). Basic and acidic residues-rich tracts occupy residues 456 to 466 (ASEKRSGHFPK), 486 to 496 (EGSRASCHDKS), and 548 to 560 (LSREFCTKNRTDL). Residues 741 to 759 (DYTTNRFGDSESSQGSQTA) are compositionally biased toward polar residues. Over residues 768-782 (LDEEDLLEEEEEDEG) the composition is skewed to acidic residues. Residues 834 to 837 (MTLV) carry the PDZ-binding motif.

It belongs to the dapper family. As to quaternary structure, interacts with dvl2.

The protein resides in the cytoplasm. It is found in the late endosome. It localises to the nucleus. The protein localises to the cell membrane. In terms of biological role, involved in regulation of intracellular signaling pathways during development. Specifically thought to play a role in canonical and/or non-canonical Wnt signaling pathways through interaction with DSH (Dishevelled) family proteins. Positive regulator of the Wnt signaling pathway which acts downstream of wnt1 indicative for non-canonical Wnt signaling. Also negatively regulates the Nodal signaling pathway, possibly by promoting the lysosomal degradation of Nodal receptors. Required for convergent extension movements in gastrulation. The chain is Dapper homolog 2 (dact2) from Danio rerio (Zebrafish).